The chain runs to 359 residues: 3-dehydroquinate synthase (359 aa).

Residues 71-76, 105-109, 129-130, Lys-142, and Lys-151 each bind NAD(+); these read DGEAYK, GVIGD, and TT. Glu-184, His-247, and His-264 together coordinate Zn(2+).

It belongs to the sugar phosphate cyclases superfamily. Dehydroquinate synthase family. Co(2+) serves as cofactor. The cofactor is Zn(2+). Requires NAD(+) as cofactor.

Its subcellular location is the cytoplasm. It carries out the reaction 7-phospho-2-dehydro-3-deoxy-D-arabino-heptonate = 3-dehydroquinate + phosphate. The protein operates within metabolic intermediate biosynthesis; chorismate biosynthesis; chorismate from D-erythrose 4-phosphate and phosphoenolpyruvate: step 2/7. Catalyzes the conversion of 3-deoxy-D-arabino-heptulosonate 7-phosphate (DAHP) to dehydroquinate (DHQ). The sequence is that of 3-dehydroquinate synthase from Burkholderia vietnamiensis (strain G4 / LMG 22486) (Burkholderia cepacia (strain R1808)).